The chain runs to 273 residues: NADPH-dependent 7-cyano-7-deazaguanine reductase (273 aa).

81 to 83 (VES) lines the substrate pocket. 83-84 (SK) is a binding site for NADPH. The active-site Thioimide intermediate is the cysteine 179. Aspartate 186 acts as the Proton donor in catalysis. 218 to 219 (AE) is a binding site for substrate. NADPH is bound at residue 247-248 (RG).

This sequence belongs to the GTP cyclohydrolase I family. QueF type 2 subfamily. Homodimer.

The protein resides in the cytoplasm. The catalysed reaction is 7-aminomethyl-7-carbaguanine + 2 NADP(+) = 7-cyano-7-deazaguanine + 2 NADPH + 3 H(+). The protein operates within tRNA modification; tRNA-queuosine biosynthesis. Its function is as follows. Catalyzes the NADPH-dependent reduction of 7-cyano-7-deazaguanine (preQ0) to 7-aminomethyl-7-deazaguanine (preQ1). The chain is NADPH-dependent 7-cyano-7-deazaguanine reductase from Rickettsia canadensis (strain McKiel).